A 616-amino-acid polypeptide reads, in one-letter code: MPKYRSHTTTHGRNMAGARALWRATGMTDDDFGKPIIAVVNSFTQFVPGHVHLRDLGKLVAEQIVASGGVAKEFNTIAVDDGIAMGHGGMLYSLPSRELIADSVEYMVNAHCADAMVCISNCDKITPGMLMASLRLNIPVIFVSGGPMEAGKTKLSDKIIKLDLIDAMIQGANPNVSDEESAQIERSACPTCGSCSGMFTANSMNCLNEALGLALPGNGSLLATHADRKQLFLDAGKHIVALTKRYYEQDDVSALPRNIANKAAFENAMILDIAMGGSTNTVLHLLAAAQEGEIDFSMTDIDHLSRKVPHLCKVAPSTQKYHMEDVHRAGGVIGILGELDRAGLLNRDVSNVLGLNLTQTLEAYDVMLTQDEGVKQMYAAGPAGIRTTKAFSQDCRYPSLDTDREEGCIRTREHAYSQDGGLAVLYGNIAADGCIVKTAGVDKDSLTFRGPAKVFESQDEAVEAILGGKVVAGDVVVIRYEGPKGGPGMQEMLYPTTYLKSMGLGKSCALLTDGRFSGGTSGLSIGHVSPEAASGGLIGLVQDGDFINIDIPNRGIVLDVSEAELAARRETEEAHGDAAWSPKGRERQVSYALRAYAMLATSADKGAVRDKSKLGG.

Asp-81 serves as a coordination point for Mg(2+). [2Fe-2S] cluster is bound at residue Cys-122. Positions 123 and 124 each coordinate Mg(2+). Lys-124 carries the post-translational modification N6-carboxylysine. Residue Cys-195 coordinates [2Fe-2S] cluster. Position 491 (Glu-491) interacts with Mg(2+). Residue Ser-517 is the Proton acceptor of the active site.

This sequence belongs to the IlvD/Edd family. In terms of assembly, homodimer. It depends on [2Fe-2S] cluster as a cofactor. The cofactor is Mg(2+).

The catalysed reaction is (2R)-2,3-dihydroxy-3-methylbutanoate = 3-methyl-2-oxobutanoate + H2O. It carries out the reaction (2R,3R)-2,3-dihydroxy-3-methylpentanoate = (S)-3-methyl-2-oxopentanoate + H2O. The protein operates within amino-acid biosynthesis; L-isoleucine biosynthesis; L-isoleucine from 2-oxobutanoate: step 3/4. Its pathway is amino-acid biosynthesis; L-valine biosynthesis; L-valine from pyruvate: step 3/4. Its function is as follows. Functions in the biosynthesis of branched-chain amino acids. Catalyzes the dehydration of (2R,3R)-2,3-dihydroxy-3-methylpentanoate (2,3-dihydroxy-3-methylvalerate) into 2-oxo-3-methylpentanoate (2-oxo-3-methylvalerate) and of (2R)-2,3-dihydroxy-3-methylbutanoate (2,3-dihydroxyisovalerate) into 2-oxo-3-methylbutanoate (2-oxoisovalerate), the penultimate precursor to L-isoleucine and L-valine, respectively. This Yersinia pseudotuberculosis serotype O:3 (strain YPIII) protein is Dihydroxy-acid dehydratase.